A 412-amino-acid chain; its full sequence is MAKQTLGSLLSSGFDLAGKRVLVRADFNVPLDAQGNITDDTRIRAALPTVQALTQAGAKVILTSHLGRPVKKDKETGAVKVAREGNSLAPVATRLSQLLGQPVAFAPDCIGPEAEAVVNRLENGQVALLENVRFYPEEEDNDPEFARKLASLADLFVNDAFGSAHRAHASTAGVTAYLQPAVAGYLVERELQFLSGAIEDPRRPLAAIIGGSKVSTKIGVIERLLEKVDKLLLGGGMIFTFYQAQGIQTGKSLVETDKLDLARSLMEKAKERGVELLLPVDVVVADRFDKDAQAQTVSIHAIPEDWMGLDIGPESVKAFQSALQGCQTVVWNGPMGVFEFDRFALGTEAIARTLADLTQAGATTIIGGGDSVAAVEKVGLADKMTHISTGGGASLELLEGKVLPGIAALTEA.

Substrate-binding positions include 26–28 (DFN), R42, 65–68 (HLGR), R133, and R166. Residues K217, G308, E339, and 368 to 371 (GGDS) each bind ATP.

The protein belongs to the phosphoglycerate kinase family. In terms of assembly, monomer.

The protein localises to the cytoplasm. It catalyses the reaction (2R)-3-phosphoglycerate + ATP = (2R)-3-phospho-glyceroyl phosphate + ADP. It functions in the pathway carbohydrate degradation; glycolysis; pyruvate from D-glyceraldehyde 3-phosphate: step 2/5. This is Phosphoglycerate kinase from Synechococcus sp. (strain JA-2-3B'a(2-13)) (Cyanobacteria bacterium Yellowstone B-Prime).